The primary structure comprises 252 residues: Fatty acid elongase 4 (252 aa).

The helical transmembrane segment at 25 to 45 (LVSWHALVLGHLLYLFVVFVM) threads the bilayer. N-linked (GlcNAc...) asparagine glycosylation is present at asparagine 56. Residues 60 to 80 (VLVVYNVLQICLSAAMAINLS) traverse the membrane as a helical segment. Asparagine 89 carries N-linked (GlcNAc...) asparagine glycosylation. 5 helical membrane-spanning segments follow: residues 100–120 (FWMFVHYCSKYIDMLDTVFIL), 127–147 (QLSFLHVYHHCTIGLIWGILL), 150–170 (GLANGTAFFGTWINSSVHFLM), 187–207 (FLLTKIQMLQFSLCILHAILV), and 214–234 (FTLGWNLLQLLYNASLLVLFL). A HxxHH motif motif is present at residues 132–136 (HVYHH). Histidine 135 (nucleophile) is an active-site residue.

This sequence belongs to the ELO family.

It localises to the membrane. It catalyses the reaction (5Z,8Z,11Z,14Z)-eicosatetraenoyl-CoA + malonyl-CoA + H(+) = (7Z,10Z,13Z,16Z)-3-oxodocosatetraenoyl-CoA + CO2 + CoA. It participates in lipid metabolism; fatty acid biosynthesis. Involved in the synthesis of fatty acids. Elongates arachidonate and other C20 polyunsaturated fatty acids (PUFAs) with a preference for n-6 PUFAs. Not involved in fatty acid synthesis up to C18. The polypeptide is Fatty acid elongase 4 (Trypanosoma brucei brucei (strain 927/4 GUTat10.1)).